A 679-amino-acid chain; its full sequence is DNA-directed RNA polymerase subunit beta' (679 aa).

Zn(2+)-binding residues include C69, C71, C84, and C87. Mg(2+) contacts are provided by D486, D488, and D490.

This sequence belongs to the RNA polymerase beta' chain family. RpoC1 subfamily. In terms of assembly, in plastids the minimal PEP RNA polymerase catalytic core is composed of four subunits: alpha, beta, beta', and beta''. When a (nuclear-encoded) sigma factor is associated with the core the holoenzyme is formed, which can initiate transcription. Mg(2+) is required as a cofactor. The cofactor is Zn(2+).

The protein localises to the plastid. It localises to the chloroplast. The enzyme catalyses RNA(n) + a ribonucleoside 5'-triphosphate = RNA(n+1) + diphosphate. Functionally, DNA-dependent RNA polymerase catalyzes the transcription of DNA into RNA using the four ribonucleoside triphosphates as substrates. The polypeptide is DNA-directed RNA polymerase subunit beta' (Physcomitrium patens (Spreading-leaved earth moss)).